The sequence spans 434 residues: Adenylosuccinate synthetase (434 aa).

GTP is bound by residues 14 to 20 (GDEGKGK) and 42 to 44 (GHE). The Proton acceptor role is filled by Asp-15. Mg(2+) contacts are provided by Asp-15 and Gly-42. IMP is bound by residues 15–18 (DEGK), 40–43 (NSGH), Thr-133, Arg-147, Asn-229, Thr-244, and Arg-308. The active-site Proton donor is the His-43. 304-310 (VTTGRVR) lines the substrate pocket. GTP-binding positions include Arg-310, 336-338 (KLD), and 422-424 (GTG).

Belongs to the adenylosuccinate synthetase family. In terms of assembly, homodimer. It depends on Mg(2+) as a cofactor.

Its subcellular location is the cytoplasm. The catalysed reaction is IMP + L-aspartate + GTP = N(6)-(1,2-dicarboxyethyl)-AMP + GDP + phosphate + 2 H(+). The protein operates within purine metabolism; AMP biosynthesis via de novo pathway; AMP from IMP: step 1/2. In terms of biological role, plays an important role in the salvage pathway for purine nucleotide biosynthesis. Catalyzes the first committed step in the biosynthesis of AMP from IMP. This chain is Adenylosuccinate synthetase, found in Theileria parva (East coast fever infection agent).